The chain runs to 235 residues: Calcium-activated potassium channel subunit beta-2 (235 aa).

The ball and chain stretch occupies residues 1–45 (MFIWTSGRTSSSYRQDEKRNIYQKIRDHDLLDKRKTVTALKAGED). The Cytoplasmic segment spans residues 1-46 (MFIWTSGRTSSSYRQDEKRNIYQKIRDHDLLDKRKTVTALKAGEDR). A helical membrane pass occupies residues 47 to 67 (AILLGLAMMVCSIMMYFLLGI). The Extracellular portion of the chain corresponds to 68–194 (TLLRSYMQSV…VILTKLYSSN (127 aa)). N88, N96, and N119 each carry an N-linked (GlcNAc...) asparagine glycan. The chain crosses the membrane as a helical span at residues 195–215 (VLFHSLFWPTCMMAGGVAIVA). The Cytoplasmic segment spans residues 216-235 (MVKLTQYLSLLCERIQRINR).

It belongs to the KCNMB (TC 8.A.14.1) family. KCNMB2 subfamily. Interacts with KCNMA1 tetramer. There are probably 4 molecules of KCMNB2 per KCNMA1 tetramer. Post-translationally, N-glycosylated.

The protein resides in the membrane. Its function is as follows. Regulatory subunit of the calcium activated potassium KCNMA1 (maxiK) channel. Modulates the calcium sensitivity and gating kinetics of KCNMA1, thereby contributing to KCNMA1 channel diversity. Acts as a negative regulator that confers rapid and complete inactivation of KCNMA1 channel complex. The chain is Calcium-activated potassium channel subunit beta-2 (Kcnmb2) from Mus musculus (Mouse).